Reading from the N-terminus, the 81-residue chain is MSGHALAARTLLAAADELVGGPPVEASAAALAGDAAGAWRTAAVELARALVRAVAESHGVAAVLFAATAAAAAAVDRGDPP.

Its function is as follows. Antitoxin component of a type II toxin-antitoxin (TA) system. Neutralizes the effect of cognate toxin MT2730. This Mycobacterium tuberculosis (strain CDC 1551 / Oshkosh) protein is Antitoxin MT2731.